Reading from the N-terminus, the 1167-residue chain is DNA-directed RNA polymerase subunit beta (1167 aa).

The disordered stretch occupies residues 1-27 (MAVSPANQATAATTSAESRSEATGIPG). A compositionally biased stretch (low complexity) spans 9 to 23 (ATAATTSAESRSEAT).

This sequence belongs to the RNA polymerase beta chain family. As to quaternary structure, the RNAP catalytic core consists of 2 alpha, 1 beta, 1 beta' and 1 omega subunit. When a sigma factor is associated with the core the holoenzyme is formed, which can initiate transcription.

It carries out the reaction RNA(n) + a ribonucleoside 5'-triphosphate = RNA(n+1) + diphosphate. DNA-dependent RNA polymerase catalyzes the transcription of DNA into RNA using the four ribonucleoside triphosphates as substrates. This chain is DNA-directed RNA polymerase subunit beta, found in Amycolatopsis mediterranei (strain S699) (Nocardia mediterranei).